The sequence spans 66 residues: ATP synthase subunit c (66 aa).

The next 2 membrane-spanning stretches (helical) occupy residues 3–23 (LTFF…GMLM) and 45–65 (IMGI…SFVI).

Belongs to the ATPase C chain family. In terms of assembly, F-type ATPases have 2 components, F(1) - the catalytic core - and F(0) - the membrane proton channel. F(1) has five subunits: alpha(3), beta(3), gamma(1), delta(1), epsilon(1). F(0) has three main subunits: a(1), b(2) and c(10-14). The alpha and beta chains form an alternating ring which encloses part of the gamma chain. F(1) is attached to F(0) by a central stalk formed by the gamma and epsilon chains, while a peripheral stalk is formed by the delta and b chains.

The protein localises to the cell membrane. Its function is as follows. F(1)F(0) ATP synthase produces ATP from ADP in the presence of a proton or sodium gradient. F-type ATPases consist of two structural domains, F(1) containing the extramembraneous catalytic core and F(0) containing the membrane proton channel, linked together by a central stalk and a peripheral stalk. During catalysis, ATP synthesis in the catalytic domain of F(1) is coupled via a rotary mechanism of the central stalk subunits to proton translocation. In terms of biological role, key component of the F(0) channel; it plays a direct role in translocation across the membrane. A homomeric c-ring of between 10-14 subunits forms the central stalk rotor element with the F(1) delta and epsilon subunits. The polypeptide is ATP synthase subunit c (atpE) (Streptococcus oralis).